Reading from the N-terminus, the 374-residue chain is Diels-Alderase fsa2 (374 aa).

Residues 1 to 216 (MSNVTVSAFT…MDRVWSPLSW (216 aa)) form a beta-sandwich motif region. The interval 216 to 374 (WPQVMTESYY…VGTGGQCELS (159 aa)) is beta-barrel motif.

This sequence belongs to the Diels-Alderase family.

It catalyses the reaction (5S)-3-[(2E,6R,8E,10E,12E)-2,6-dimethyltetradeca-2,8,10,12-tetraenoyl]-5-(hydroxymethyl)pyrrolidine-2,4-dione = trichosetin. It participates in mycotoxin biosynthesis. Its function is as follows. Diels-Alderase; part of the gene cluster that mediates the biosynthesis of the HIV-1 integrase inhibitor equisetin and of fusarisetin A, both trans-fused decalin-containing tetramic acids showing also antimicrobial activity. The PKS module of fsa1 together with the enoylreductase fsa3 catalyze the formation of the polyketide unit which is then conjugated to L-serine by the condensation domain of the fsa1 NRPS module. Activity of the Dieckmann cyclase domain (RED) results in release of the Dieckmann product intermediate. Diels-Alderase fsa2 is involved in endo-selective Diels-Alder cycloaddition to form the decalin ring, leading to the production of N-desmethylequisetin also called trichosetin. Subsequent N-methylation is carried out by fsa4 to give equisetin. The enzymatic gene responsible for the conversion of equisetin to fusarisetin A has not been identified yet and is probably located outside of the fsa cluster. The sequence is that of Diels-Alderase fsa2 from Fusarium sp. (strain FN080326).